The primary structure comprises 313 residues: MIIVTGGAGMIGSNIVKSLNDKGFNDILVVDNLKDGKKFKNLVDLDITDYMDKEDFITQIMAGDDFGPIEAIFHEGACSATTEWDGKYIMMNNYEYSKELLHFCIEREIPFLYASSAATYGETDTFIEEREYEGALNVYGYSKQQFDNYVRRLWADAEEHNETLSQITGFRYFNVYGPREQHKGSMASVAFHLNNQMNAGDNPKLFEGSDEFKRDFVYVGDVAAVNLWFLENGVSGIYNCGTGRAEPFRAVAEAVIKHHGKGEVETIPFPEHLKGAYQEFTQADLTKLRAAGCDVEFKSVADGVAEYMAMINK.

NADP(+)-binding positions include 10-11, 31-32, K38, K53, 75-79, and N92; these read MI, DN, and EGACS. The active-site Proton acceptor is Y139. K143 contacts NADP(+). N174 serves as a coordination point for substrate. 2 residues coordinate NADP(+): V175 and K183. K183 serves as the catalytic Proton acceptor. Substrate is bound by residues S185, H192, 206–209, R214, and Y277; that span reads FEGS.

This sequence belongs to the NAD(P)-dependent epimerase/dehydratase family. HldD subfamily. In terms of assembly, homopentamer. NADP(+) serves as cofactor.

The catalysed reaction is ADP-D-glycero-beta-D-manno-heptose = ADP-L-glycero-beta-D-manno-heptose. The protein operates within nucleotide-sugar biosynthesis; ADP-L-glycero-beta-D-manno-heptose biosynthesis; ADP-L-glycero-beta-D-manno-heptose from D-glycero-beta-D-manno-heptose 7-phosphate: step 4/4. In terms of biological role, catalyzes the interconversion between ADP-D-glycero-beta-D-manno-heptose and ADP-L-glycero-beta-D-manno-heptose via an epimerization at carbon 6 of the heptose. In Aliivibrio fischeri (strain MJ11) (Vibrio fischeri), this protein is ADP-L-glycero-D-manno-heptose-6-epimerase.